A 109-amino-acid chain; its full sequence is Cell division protein ZapA (109 aa).

Residues 22-99 (EQQDALNMAA…IEQALLEQGR (78 aa)) adopt a coiled-coil conformation.

Belongs to the ZapA family. Type 1 subfamily. As to quaternary structure, homodimer. Interacts with FtsZ.

It is found in the cytoplasm. Its function is as follows. Activator of cell division through the inhibition of FtsZ GTPase activity, therefore promoting FtsZ assembly into bundles of protofilaments necessary for the formation of the division Z ring. It is recruited early at mid-cell but it is not essential for cell division. The chain is Cell division protein ZapA from Yersinia enterocolitica serotype O:8 / biotype 1B (strain NCTC 13174 / 8081).